A 256-amino-acid polypeptide reads, in one-letter code: Small ribosomal subunit protein eS1 (256 aa).

Positions 1–18 (MAVGKNKRLSKGKKGIKK) are enriched in basic residues. The interval 1–20 (MAVGKNKRLSKGKKGIKKRT) is disordered. A2 is modified (N-acetylalanine; partial).

This sequence belongs to the eukaryotic ribosomal protein eS1 family. In terms of assembly, component of the small ribosomal subunit. Mature ribosomes consist of a small (40S) and a large (60S) subunit. The 40S subunit contains about 33 different proteins and 1 molecule of RNA (18S). The 60S subunit contains about 49 different proteins and 3 molecules of RNA (25S, 5.8S and 5S).

Its subcellular location is the cytoplasm. In Emericella nidulans (strain FGSC A4 / ATCC 38163 / CBS 112.46 / NRRL 194 / M139) (Aspergillus nidulans), this protein is Small ribosomal subunit protein eS1 (rps1).